Reading from the N-terminus, the 142-residue chain is Peptide methionine sulfoxide reductase MsrB (142 aa).

A MsrB domain is found at 3–126 (KEELKKKLSP…NSAALRFIPF (124 aa)). C115 (nucleophile) is an active-site residue.

This sequence belongs to the MsrB Met sulfoxide reductase family.

The enzyme catalyses L-methionyl-[protein] + [thioredoxin]-disulfide + H2O = L-methionyl-(R)-S-oxide-[protein] + [thioredoxin]-dithiol. The sequence is that of Peptide methionine sulfoxide reductase MsrB from Lactococcus lactis subsp. cremoris (strain SK11).